The sequence spans 161 residues: Nucleotide-binding protein Pnec_0318 (161 aa).

It belongs to the YajQ family.

Functionally, nucleotide-binding protein. This Polynucleobacter necessarius subsp. necessarius (strain STIR1) protein is Nucleotide-binding protein Pnec_0318.